The following is a 247-amino-acid chain: Carboxy-S-adenosyl-L-methionine synthase (247 aa).

Residues Tyr-39, 64-66 (GCS), 89-90 (DN), 117-118 (DI), Asn-132, and Arg-199 each bind S-adenosyl-L-methionine.

It belongs to the class I-like SAM-binding methyltransferase superfamily. Cx-SAM synthase family. Homodimer.

It catalyses the reaction prephenate + S-adenosyl-L-methionine = carboxy-S-adenosyl-L-methionine + 3-phenylpyruvate + H2O. Functionally, catalyzes the conversion of S-adenosyl-L-methionine (SAM) to carboxy-S-adenosyl-L-methionine (Cx-SAM). This chain is Carboxy-S-adenosyl-L-methionine synthase, found in Salmonella choleraesuis (strain SC-B67).